An 84-amino-acid polypeptide reads, in one-letter code: Small ribosomal subunit protein uS17 (84 aa).

Belongs to the universal ribosomal protein uS17 family. In terms of assembly, part of the 30S ribosomal subunit.

In terms of biological role, one of the primary rRNA binding proteins, it binds specifically to the 5'-end of 16S ribosomal RNA. This is Small ribosomal subunit protein uS17 from Klebsiella pneumoniae subsp. pneumoniae (strain ATCC 700721 / MGH 78578).